A 497-amino-acid polypeptide reads, in one-letter code: MPTDSKMAKFLQSYGYDLILGSVAAIYVVMAPYTKVEESFNVQSMHDILYHRHHLDSYDHLEFPGVVPRTFIGAFIVSVFASPVVSIISCLGFPKVYSLVAARLVLGCIILSTLRFFRIQIKKKFGNQVETFFVLFTSLQFHFLFYCTRPLPNILALGLVNLAYGNWLKGNFYPALSFLIFATVIFRCDTMLLLGPIGLELLLTKSISFWKALKYCVGTALLAVGLTIFVDSIMWKKFVWPEFEVFWFNSILNRSSDWGTHSIHWYFTSALPRSLLVAYPLSLLGTLVDRRVPFFIVPVLSFVILYSKLPHKELRFIISSVPMFNLSAAVAASRIYNNRKKTIWKLVNMVMLAFFAISAGCTVVTFMASYYNYPSGYALKRLHQIGHPANVAGEEWVHIDTFGAMNGISRFCEDDFPWRYSKEEEIVVEELRNRNFTYLVNEHSSVDGYKCLFYEEGFERLELRRGFPPIVLVKKAKVYLHREMKKEDPFHKKWPGC.

7 helical membrane-spanning segments follow: residues phenylalanine 10 to methionine 30, phenylalanine 71 to leucine 91, glycine 92 to serine 112, phenylalanine 125 to phenylalanine 145, isoleucine 154 to proline 174, phenylalanine 178 to glycine 198, and tyrosine 215 to tryptophan 235. Asparagine 253 is a glycosylation site (N-linked (GlcNAc...) asparagine). 4 consecutive transmembrane segments (helical) span residues isoleucine 263 to glycine 285, valine 292 to lysine 312, phenylalanine 316 to tyrosine 336, and leucine 346 to phenylalanine 366. The N-linked (GlcNAc...) asparagine glycan is linked to asparagine 435.

Belongs to the glycosyltransferase 22 family.

It is found in the endoplasmic reticulum membrane. It catalyses the reaction an alpha-D-Man-(1-&gt;2)-alpha-D-Man-(1-&gt;2)-alpha-D-Man-(1-&gt;3)-[alpha-D-Man-(1-&gt;2)-alpha-D-Man-(1-&gt;3)-alpha-D-Man-(1-&gt;6)]-beta-D-Man-(1-&gt;4)-beta-D-GlcNAc-(1-&gt;4)-alpha-D-GlcNAc-diphospho-di-trans,poly-cis-dolichol + a di-trans,poly-cis-dolichyl beta-D-mannosyl phosphate = an alpha-D-Man-(1-&gt;2)-alpha-D-Man-(1-&gt;2)-alpha-D-Man-(1-&gt;3)-[alpha-D-Man-(1-&gt;2)-alpha-D-Man-(1-&gt;3)-[alpha-D-Man-(1-&gt;6)]-alpha-D-Man-(1-&gt;6)]-beta-D-Man-(1-&gt;4)-beta-D-GlcNAc-(1-&gt;4)-alpha-D-GlcNAc-diphospho-di-trans,poly-cis-dolichol + a di-trans,poly-cis-dolichyl phosphate + H(+). The protein operates within protein modification; protein glycosylation. Mannosyltransferase that operates in the biosynthetic pathway of dolichol-linked oligosaccharides, the glycan precursors employed in protein asparagine (N)-glycosylation. The assembly of dolichol-linked oligosaccharides begins on the cytosolic side of the endoplasmic reticulum membrane and finishes in its lumen. The sequential addition of sugars to dolichol pyrophosphate produces dolichol-linked oligosaccharides containing fourteen sugars, including two GlcNAcs, nine mannoses and three glucoses. Once assembled, the oligosaccharide is transferred from the lipid to nascent proteins by oligosaccharyltransferases. In the lumen of the endoplasmic reticulum, adds the eighth mannose residue in an alpha-1,6 linkage onto Man(7)GlcNAc(2)-PP-dolichol to produce Man(8)GlcNAc(2)-PP-dolichol. The sequence is that of Dol-P-Man:Man(7)GlcNAc(2)-PP-Dol alpha-1,6-mannosyltransferase (ALG12) from Arabidopsis thaliana (Mouse-ear cress).